The sequence spans 298 residues: Inosose dehydratase (298 aa).

It belongs to the IolE/MocC family. It depends on glutathione as a cofactor. Requires Co(2+) as cofactor. Mn(2+) is required as a cofactor.

It carries out the reaction scyllo-inosose = 3D-3,5/4-trihydroxycyclohexane-1,2-dione + H2O. In terms of biological role, catalyzes the dehydration of inosose (2-keto-myo-inositol, 2KMI or 2,4,6/3,5-pentahydroxycyclohexanone) to 3D-(3,5/4)-trihydroxycyclohexane-1,2-dione (D-2,3-diketo-4-deoxy-epi-inositol). The chain is Inosose dehydratase from Serratia proteamaculans (strain 568).